The following is a 387-amino-acid chain: uncharacterized protein (387 aa).

It localises to the virion. This is an uncharacterized protein from Acanthamoeba polyphaga (Amoeba).